A 111-amino-acid polypeptide reads, in one-letter code: Cell cycle protein GpsB (111 aa).

The stretch at 32 to 63 (LDDIMKDYDAYEAIIKELKGEIARLKAQAANS) forms a coiled coil. A disordered region spans residues 59 to 80 (QAANSPKTTLPTEESNDVLRTE). The segment covering 60 to 71 (AANSPKTTLPTE) has biased composition (polar residues).

This sequence belongs to the GpsB family. Forms polymers through the coiled coil domains. Interacts with PBP1, MreC and EzrA.

The protein resides in the cytoplasm. Its function is as follows. Divisome component that associates with the complex late in its assembly, after the Z-ring is formed, and is dependent on DivIC and PBP2B for its recruitment to the divisome. Together with EzrA, is a key component of the system that regulates PBP1 localization during cell cycle progression. Its main role could be the removal of PBP1 from the cell pole after pole maturation is completed. Also contributes to the recruitment of PBP1 to the division complex. Not essential for septum formation. The polypeptide is Cell cycle protein GpsB (Streptococcus suis (strain 98HAH33)).